Reading from the N-terminus, the 216-residue chain is 2-hydroxy-3-keto-5-methylthiopentenyl-1-phosphate phosphatase (216 aa).

Belongs to the HAD-like hydrolase superfamily. MtnX family.

The enzyme catalyses 2-hydroxy-5-methylsulfanyl-3-oxopent-1-enyl phosphate + H2O = 1,2-dihydroxy-5-(methylsulfanyl)pent-1-en-3-one + phosphate. Its pathway is amino-acid biosynthesis; L-methionine biosynthesis via salvage pathway; L-methionine from S-methyl-5-thio-alpha-D-ribose 1-phosphate: step 4/6. In terms of biological role, dephosphorylates 2-hydroxy-3-keto-5-methylthiopentenyl-1-phosphate (HK-MTPenyl-1-P) yielding 1,2-dihydroxy-3-keto-5-methylthiopentene (DHK-MTPene). In Exiguobacterium sp. (strain ATCC BAA-1283 / AT1b), this protein is 2-hydroxy-3-keto-5-methylthiopentenyl-1-phosphate phosphatase.